A 316-amino-acid chain; its full sequence is Acetyl-coenzyme A carboxylase carboxyl transferase subunit alpha (316 aa).

In terms of domain architecture, CoA carboxyltransferase C-terminal spans 36–290; it reads PLRTQLETLR…GSVISRHLDD (255 aa).

The protein belongs to the AccA family. As to quaternary structure, acetyl-CoA carboxylase is a heterohexamer composed of biotin carboxyl carrier protein (AccB), biotin carboxylase (AccC) and two subunits each of ACCase subunit alpha (AccA) and ACCase subunit beta (AccD).

It localises to the cytoplasm. It carries out the reaction N(6)-carboxybiotinyl-L-lysyl-[protein] + acetyl-CoA = N(6)-biotinyl-L-lysyl-[protein] + malonyl-CoA. The protein operates within lipid metabolism; malonyl-CoA biosynthesis; malonyl-CoA from acetyl-CoA: step 1/1. Functionally, component of the acetyl coenzyme A carboxylase (ACC) complex. First, biotin carboxylase catalyzes the carboxylation of biotin on its carrier protein (BCCP) and then the CO(2) group is transferred by the carboxyltransferase to acetyl-CoA to form malonyl-CoA. The sequence is that of Acetyl-coenzyme A carboxylase carboxyl transferase subunit alpha from Deinococcus radiodurans (strain ATCC 13939 / DSM 20539 / JCM 16871 / CCUG 27074 / LMG 4051 / NBRC 15346 / NCIMB 9279 / VKM B-1422 / R1).